The following is a 174-amino-acid chain: Putative NADH dehydrogenase/NAD(P)H nitroreductase AF_2267 (174 aa).

107 to 112 (AARCLG) is a binding site for NAD(+).

The protein belongs to the nitroreductase family. It depends on FMN as a cofactor.

This chain is Putative NADH dehydrogenase/NAD(P)H nitroreductase AF_2267, found in Archaeoglobus fulgidus (strain ATCC 49558 / DSM 4304 / JCM 9628 / NBRC 100126 / VC-16).